The chain runs to 347 residues: Peroxidase C2 (347 aa).

Positions 1–24 are cleaved as a signal peptide; it reads MHSSSSLIKLGFLLLLLNVSLSHA. Disulfide bonds link cysteine 35–cysteine 115, cysteine 68–cysteine 73, cysteine 121–cysteine 325, and cysteine 201–cysteine 233. The Proton acceptor role is filled by histidine 66. Residues aspartate 67, valine 70, glycine 72, aspartate 74, and serine 76 each coordinate Ca(2+). Asparagine 81 carries an N-linked (GlcNAc...) asparagine glycan. Residue proline 163 coordinates substrate. A heme b-binding site is contributed by histidine 194. Residue threonine 195 participates in Ca(2+) binding. Residues asparagine 210 and asparagine 238 are each glycosylated (N-linked (GlcNAc...) asparagine). 3 residues coordinate Ca(2+): aspartate 246, threonine 249, and aspartate 254.

This sequence belongs to the peroxidase family. Classical plant (class III) peroxidase subfamily. Ca(2+) serves as cofactor. Requires heme b as cofactor.

It localises to the secreted. The protein resides in the vacuole. It carries out the reaction 2 a phenolic donor + H2O2 = 2 a phenolic radical donor + 2 H2O. Functionally, removal of H(2)O(2), oxidation of toxic reductants, biosynthesis and degradation of lignin, suberization, auxin catabolism, response to environmental stresses such as wounding, pathogen attack and oxidative stress. These functions might be dependent on each isozyme/isoform in each plant tissue. The chain is Peroxidase C2 (PRXC2) from Armoracia rusticana (Horseradish).